The primary structure comprises 160 residues: Putative control protein C.MjaVP (160 aa).

Functionally, may be involved in control of expression of the type II restriction enzyme MjaV and/or its methyltransferase M.MjaV. This Methanocaldococcus jannaschii (strain ATCC 43067 / DSM 2661 / JAL-1 / JCM 10045 / NBRC 100440) (Methanococcus jannaschii) protein is Putative control protein C.MjaVP.